We begin with the raw amino-acid sequence, 671 residues long: uncharacterized protein (671 aa).

Residues 39-56 (ATVTVVILLLILLLGWGY) traverse the membrane as a helical segment.

It localises to the membrane. This is an uncharacterized protein from Treponema pallidum (strain Nichols).